The chain runs to 251 residues: MSAPSGGGEGGGKESAAGGVSSSSLAPSSLPPPRPKSPPEYPDLYGKRREAARVQMLEREIGFLEGEIKFIEGVQPASRCIKEVSDFVVANSDPLIPAQRKSRRSFRFWKWLCGPCLSLVSFCCCCQSKCSCHLRKPKCCNCTSCSCIGSKCCDGSCCSNICCCPRLSCPSCSCFRGCWCSCPDMSCCIPSCFRSCSCTRPSCLNKKKSSCCSCNCKIRWSSCFSCPKVRLCSCCFCNCKNLCSNPCCLAF.

The span at 1–10 shows a compositional bias: gly residues; that stretch reads MSAPSGGGEG. The interval 1 to 44 is disordered; that stretch reads MSAPSGGGEGGGKESAAGGVSSSSLAPSSLPPPRPKSPPEYPDL. Residues 14–28 are compositionally biased toward low complexity; the sequence is ESAAGGVSSSSLAPS. Pro residues predominate over residues 29 to 41; that stretch reads SLPPPRPKSPPEY. The G protein gamma domain occupies 46–126; sequence GKRREAARVQ…LSLVSFCCCC (81 aa). Cys-248 is modified (cysteine methyl ester). Residue Cys-248 is the site of S-farnesyl cysteine attachment. Positions 249-251 are cleaved as a propeptide — removed in mature form; it reads LAF.

In terms of assembly, g proteins are composed of 3 units, alpha, beta and gamma. Expressed in flowers and siliques.

Guanine nucleotide-binding proteins (G proteins) are involved as a modulator or transducer in various transmembrane signaling systems. The beta and gamma chains are required for the GTPase activity, for replacement of GDP by GTP, and for G protein-effector interaction. This is Guanine nucleotide-binding protein subunit gamma 3 (GG3) from Arabidopsis thaliana (Mouse-ear cress).